A 430-amino-acid chain; its full sequence is Serine--tRNA ligase (430 aa).

Residue 236-238 coordinates L-serine; the sequence is TAE. Residue 267–269 coordinates ATP; the sequence is RRE. Position 290 (Glu290) interacts with L-serine. 354 to 357 lines the ATP pocket; sequence EISS. Ser390 lines the L-serine pocket.

Belongs to the class-II aminoacyl-tRNA synthetase family. Type-1 seryl-tRNA synthetase subfamily. In terms of assembly, homodimer. The tRNA molecule binds across the dimer.

The protein localises to the cytoplasm. The enzyme catalyses tRNA(Ser) + L-serine + ATP = L-seryl-tRNA(Ser) + AMP + diphosphate + H(+). The catalysed reaction is tRNA(Sec) + L-serine + ATP = L-seryl-tRNA(Sec) + AMP + diphosphate + H(+). Its pathway is aminoacyl-tRNA biosynthesis; selenocysteinyl-tRNA(Sec) biosynthesis; L-seryl-tRNA(Sec) from L-serine and tRNA(Sec): step 1/1. Catalyzes the attachment of serine to tRNA(Ser). Is also able to aminoacylate tRNA(Sec) with serine, to form the misacylated tRNA L-seryl-tRNA(Sec), which will be further converted into selenocysteinyl-tRNA(Sec). The chain is Serine--tRNA ligase from Gloeothece citriformis (strain PCC 7424) (Cyanothece sp. (strain PCC 7424)).